The following is a 135-amino-acid chain: MEEYENLLNRAIDQLPPEVFEHKRFKIPKAYSDIQGNRTFIKNFKDVAEDLNRDPQHVLKFLLRELGTAGNLEGSRAILQGKFTHYLINERLEDYVEKYVICHECNRPDTKIIREDRIFILKCAACGAKAPLKPL.

This sequence belongs to the eIF-2-beta/eIF-5 family. In terms of assembly, heterotrimer composed of an alpha, a beta and a gamma chain.

In terms of biological role, eIF-2 functions in the early steps of protein synthesis by forming a ternary complex with GTP and initiator tRNA. This chain is Translation initiation factor 2 subunit beta, found in Methanobrevibacter smithii (strain ATCC 35061 / DSM 861 / OCM 144 / PS).